The sequence spans 250 residues: Glucosamine-6-phosphate deaminase (250 aa).

Asp-67 serves as the catalytic Proton acceptor; for enolization step. Asn-136 acts as the For ring-opening step in catalysis. The active-site Proton acceptor; for ring-opening step is the His-138. The For ring-opening step role is filled by Glu-143.

Belongs to the glucosamine/galactosamine-6-phosphate isomerase family. NagB subfamily.

The catalysed reaction is alpha-D-glucosamine 6-phosphate + H2O = beta-D-fructose 6-phosphate + NH4(+). It functions in the pathway amino-sugar metabolism; N-acetylneuraminate degradation; D-fructose 6-phosphate from N-acetylneuraminate: step 5/5. Its function is as follows. Catalyzes the reversible isomerization-deamination of glucosamine 6-phosphate (GlcN6P) to form fructose 6-phosphate (Fru6P) and ammonium ion. This is Glucosamine-6-phosphate deaminase from Oceanobacillus iheyensis (strain DSM 14371 / CIP 107618 / JCM 11309 / KCTC 3954 / HTE831).